The primary structure comprises 147 residues: D-aminoacyl-tRNA deacylase (147 aa).

Residues Gly-136–Pro-137 carry the Gly-cisPro motif, important for rejection of L-amino acids motif.

Belongs to the DTD family. As to quaternary structure, homodimer.

It is found in the cytoplasm. It carries out the reaction glycyl-tRNA(Ala) + H2O = tRNA(Ala) + glycine + H(+). The catalysed reaction is a D-aminoacyl-tRNA + H2O = a tRNA + a D-alpha-amino acid + H(+). An aminoacyl-tRNA editing enzyme that deacylates mischarged D-aminoacyl-tRNAs. Also deacylates mischarged glycyl-tRNA(Ala), protecting cells against glycine mischarging by AlaRS. Acts via tRNA-based rather than protein-based catalysis; rejects L-amino acids rather than detecting D-amino acids in the active site. By recycling D-aminoacyl-tRNA to D-amino acids and free tRNA molecules, this enzyme counteracts the toxicity associated with the formation of D-aminoacyl-tRNA entities in vivo and helps enforce protein L-homochirality. The polypeptide is D-aminoacyl-tRNA deacylase (Streptococcus pneumoniae (strain P1031)).